The primary structure comprises 218 residues: Small ribosomal subunit protein uS3c (218 aa).

A KH type-2 domain is found at 47–118 (VQKNMKTSSG…KLNIAITRIE (72 aa)).

This sequence belongs to the universal ribosomal protein uS3 family. Part of the 30S ribosomal subunit.

It is found in the plastid. Its subcellular location is the chloroplast. This Helianthus annuus (Common sunflower) protein is Small ribosomal subunit protein uS3c (rps3).